Here is a 371-residue protein sequence, read N- to C-terminus: Cysteine proteinase 1 (371 aa).

An N-terminal signal peptide occupies residues 1–18 (MAHRVLLLLSLASAAAVA). Residues 19-136 (AAVDAEDPLI…HEAPVLPTDG (118 aa)) constitute a propeptide, activation peptide. 2 disulfides stabilise this stretch: cysteine 158–cysteine 208 and cysteine 192–cysteine 241. The active site involves cysteine 161. N-linked (GlcNAc...) asparagine glycosylation is present at asparagine 254. Cysteines 297 and 354 form a disulfide. Catalysis depends on residues histidine 303 and asparagine 330.

Belongs to the peptidase C1 family. Expressed during the late stages of seed ripening, in mature seeds and during germination.

In terms of biological role, involved in the degradation of the storage protein zein. May play a role in proteolysis during emergencies. This chain is Cysteine proteinase 1 (CCP1), found in Zea mays (Maize).